A 349-amino-acid polypeptide reads, in one-letter code: MTRAERKRQHINHALSIGQKRETGLDDITFVHVSLPDLALEQVDISTKIGELSSSSPIFINAMTGGGGKLTYEINKSLARAASQAGIPLAVGSQMSALKDPSERLSYEIVRKENPNGLIFANLGSEATAAQAKEAVEMIGANALQIHLNVIQEIVMPEGDRSFSGALKRIEQICSRVSVPVIVKEVGFGMSKASAGKLYEAGAAAVDIGGYGGTNFSKIENLRRQRQISFFNSWGISTAASLAEIRSEFPASTMIASGGLQDALDVAKAIALGASCTGMAGHFLKALTDSGEEGLLEEIQLILEELKLIMTVLGARTIADLQKAPLVIKGETHHWLTERGVNTSSYSVR.

6 to 7 provides a ligand contact to substrate; it reads RK. FMN-binding positions include 62 to 64, S93, and N122; that span reads AMT. Q152 contributes to the substrate binding site. Position 153 (E153) interacts with Mg(2+). Residues K184, T214, 258–259, and 280–281 each bind FMN; these read GG and AG.

Belongs to the IPP isomerase type 2 family. In terms of assembly, homooctamer. Dimer of tetramers. The cofactor is FMN. NADPH is required as a cofactor. Requires Mg(2+) as cofactor.

The protein localises to the cytoplasm. It catalyses the reaction isopentenyl diphosphate = dimethylallyl diphosphate. Functionally, involved in the biosynthesis of isoprenoids. Catalyzes the 1,3-allylic rearrangement of the homoallylic substrate isopentenyl (IPP) to its allylic isomer, dimethylallyl diphosphate (DMAPP). The protein is Isopentenyl-diphosphate delta-isomerase of Bacillus subtilis (strain 168).